A 161-amino-acid polypeptide reads, in one-letter code: Peroxynitrite isomerase 2 (161 aa).

Residues 17–23 carry the GXWXGXG motif; sequence GTWTGRG. Histidine 152 contacts heme b.

It belongs to the nitrobindin family. Homodimer. Heme b is required as a cofactor.

The enzyme catalyses peroxynitrite = nitrate. It functions in the pathway nitrogen metabolism. Heme-binding protein able to scavenge peroxynitrite and to protect free L-tyrosine against peroxynitrite-mediated nitration, by acting as a peroxynitrite isomerase that converts peroxynitrite to nitrate. Therefore, this protein likely plays a role in peroxynitrite sensing and in the detoxification of reactive nitrogen and oxygen species (RNS and ROS, respectively). Is able to bind nitric oxide (NO) in vitro, but may act as a sensor of peroxynitrite levels in vivo. In Mycobacterium avium (strain 104), this protein is Peroxynitrite isomerase 2.